The chain runs to 410 residues: Cytohesin-2 (410 aa).

A coiled-coil region spans residues 13–56 (PEERMELENIRRRKQELLVEIQRLREELSEAMSEVEGLEANEGS). In terms of domain architecture, SEC7 spans 54–241 (EGSKTLQRNR…RNLYDSIRNE (188 aa)). The PH domain occupies 259-386 (NPDREGWLLK…WIKSIQAAVS (128 aa)). A 1,2-diacyl-sn-glycero-3-phospho-(1D-myo-inositol-3,4,5-trisphosphate) contacts are provided by residues 268 to 271 (KLGA), arginine 290, tyrosine 301, arginine 311, lysine 349, asparagine 360, and histidine 361. The C-terminal autoinhibitory region stretch occupies residues 397–405 (RKKRISVKK).

As to quaternary structure, heteromer. Composed of TAMALIN, CYTH2 and at least one GRM1. Interacts with ARRB1. Interacts with ARL4D; the interaction is direct. Directly interacts with CCDC120 through the coiled coil domain; this interaction stabilizes CCDC120, possibly by preventing its ubiquitination, and is required for neurite growth in neuroblastoma cells. Interacts (via N-terminal domain) with INAVA (via N-terminal domain).

The protein localises to the cell membrane. The protein resides in the cytoplasm. Its subcellular location is the cell projection. It is found in the growth cone. In terms of biological role, acts as a guanine-nucleotide exchange factor (GEF). Promotes guanine-nucleotide exchange on ARF1, ARF3 and ARF6. Promotes the activation of ARF factors through replacement of GDP with GTP. The cell membrane form, in association with ARL4 proteins, recruits ARF6 to the plasma membrane. Involved in neurite growth. The chain is Cytohesin-2 (CYTH2) from Bos taurus (Bovine).